Reading from the N-terminus, the 60-residue chain is Cytotoxin 5 (60 aa).

4 disulfides stabilise this stretch: Cys3–Cys21, Cys14–Cys38, Cys42–Cys53, and Cys54–Cys59.

The protein belongs to the three-finger toxin family. Short-chain subfamily. Type IA cytotoxin sub-subfamily. As to quaternary structure, monomer in solution; Homodimer and oligomer in the presence of negatively charged lipids forming a pore with a size ranging between 20 and 30 Angstroms. Expressed by the venom gland.

The protein resides in the secreted. It localises to the target cell membrane. Its function is as follows. Shows cytolytic activity on many different cells by forming pore in lipid membranes. In vivo, increases heart rate or kills the animal by cardiac arrest. In addition, it binds to heparin with high affinity, interacts with Kv channel-interacting protein 1 (KCNIP1) in a calcium-independent manner, and binds to integrin alpha-V/beta-3 (ITGAV/ITGB3) with moderate affinity. The protein is Cytotoxin 5 of Naja kaouthia (Monocled cobra).